A 434-amino-acid polypeptide reads, in one-letter code: Histidinol dehydrogenase (434 aa).

NAD(+) is bound by residues tyrosine 130, glutamine 191, and asparagine 214. Residues serine 237, glutamine 259, and histidine 262 each contribute to the substrate site. Positions 259 and 262 each coordinate Zn(2+). Residues glutamate 328 and histidine 329 each act as proton acceptor in the active site. Substrate contacts are provided by histidine 329, aspartate 362, glutamate 416, and histidine 421. Residue aspartate 362 participates in Zn(2+) binding. Histidine 421 contacts Zn(2+).

This sequence belongs to the histidinol dehydrogenase family. It depends on Zn(2+) as a cofactor.

The enzyme catalyses L-histidinol + 2 NAD(+) + H2O = L-histidine + 2 NADH + 3 H(+). The protein operates within amino-acid biosynthesis; L-histidine biosynthesis; L-histidine from 5-phospho-alpha-D-ribose 1-diphosphate: step 9/9. Functionally, catalyzes the sequential NAD-dependent oxidations of L-histidinol to L-histidinaldehyde and then to L-histidine. The polypeptide is Histidinol dehydrogenase (Rhodospirillum rubrum (strain ATCC 11170 / ATH 1.1.1 / DSM 467 / LMG 4362 / NCIMB 8255 / S1)).